The following is a 443-amino-acid chain: Tubulin beta chain (443 aa).

The GTP site is built by Q11, E69, S138, G142, T143, G144, N204, and N226. E69 contacts Mg(2+). The tract at residues E421–N443 is disordered. The span at S429–N443 shows a compositional bias: acidic residues.

Belongs to the tubulin family. Dimer of alpha and beta chains. A typical microtubule is a hollow water-filled tube with an outer diameter of 25 nm and an inner diameter of 15 nM. Alpha-beta heterodimers associate head-to-tail to form protofilaments running lengthwise along the microtubule wall with the beta-tubulin subunit facing the microtubule plus end conferring a structural polarity. Microtubules usually have 13 protofilaments but different protofilament numbers can be found in some organisms and specialized cells. It depends on Mg(2+) as a cofactor.

It localises to the cytoplasm. The protein resides in the cytoskeleton. Its function is as follows. Tubulin is the major constituent of microtubules, a cylinder consisting of laterally associated linear protofilaments composed of alpha- and beta-tubulin heterodimers. Microtubules grow by the addition of GTP-tubulin dimers to the microtubule end, where a stabilizing cap forms. Below the cap, tubulin dimers are in GDP-bound state, owing to GTPase activity of alpha-tubulin. This Polytomella agilis (Quadriflagellate alga) protein is Tubulin beta chain (TUBB1).